The primary structure comprises 463 residues: Chromosomal replication initiator protein DnaA (463 aa).

Positions 1-84 (MNTNQIILTN…QLFQHYNNAI (84 aa)) are domain I, interacts with DnaA modulators. The interval 84 to 124 (IKTVEIITKELPASNQATLELPTKTFADIGSSELNSENIFS) is domain II. A domain III, AAA+ region region spans residues 125 to 343 (TFDIRFTFDN…GALNKVIAHS (219 aa)). ATP-binding residues include glycine 171, glycine 173, lysine 174, and threonine 175. The tract at residues 344–463 (NFTAKEITLE…INLMMKILQN (120 aa)) is domain IV, binds dsDNA.

The protein belongs to the DnaA family. Oligomerizes as a right-handed, spiral filament on DNA at oriC.

Its subcellular location is the cytoplasm. Functionally, plays an essential role in the initiation and regulation of chromosomal replication. ATP-DnaA binds to the origin of replication (oriC) to initiate formation of the DNA replication initiation complex once per cell cycle. Binds the DnaA box (a 9 base pair repeat at the origin) and separates the double-stranded (ds)DNA. Forms a right-handed helical filament on oriC DNA; dsDNA binds to the exterior of the filament while single-stranded (ss)DNA is stabiized in the filament's interior. The ATP-DnaA-oriC complex binds and stabilizes one strand of the AT-rich DNA unwinding element (DUE), permitting loading of DNA polymerase. After initiation quickly degrades to an ADP-DnaA complex that is not apt for DNA replication. Binds acidic phospholipids. This Rickettsia bellii (strain OSU 85-389) protein is Chromosomal replication initiator protein DnaA.